We begin with the raw amino-acid sequence, 91 residues long: Elongation factor 1-beta (91 aa).

Belongs to the EF-1-beta/EF-1-delta family.

Its function is as follows. Promotes the exchange of GDP for GTP in EF-1-alpha/GDP, thus allowing the regeneration of EF-1-alpha/GTP that could then be used to form the ternary complex EF-1-alpha/GTP/AAtRNA. In Thermococcus gammatolerans (strain DSM 15229 / JCM 11827 / EJ3), this protein is Elongation factor 1-beta.